A 214-amino-acid polypeptide reads, in one-letter code: Octanoyltransferase (214 aa).

One can recognise a BPL/LPL catalytic domain in the interval 32-207 (EDTLDEIWLV…NLLALLNHPP (176 aa)). Substrate contacts are provided by residues 71–78 (RGGQVTYH), 138–140 (SLG), and 151–153 (GLA). Catalysis depends on cysteine 169, which acts as the Acyl-thioester intermediate.

Belongs to the LipB family.

The protein localises to the cytoplasm. It carries out the reaction octanoyl-[ACP] + L-lysyl-[protein] = N(6)-octanoyl-L-lysyl-[protein] + holo-[ACP] + H(+). It functions in the pathway protein modification; protein lipoylation via endogenous pathway; protein N(6)-(lipoyl)lysine from octanoyl-[acyl-carrier-protein]: step 1/2. Catalyzes the transfer of endogenously produced octanoic acid from octanoyl-acyl-carrier-protein onto the lipoyl domains of lipoate-dependent enzymes. Lipoyl-ACP can also act as a substrate although octanoyl-ACP is likely to be the physiological substrate. In Klebsiella pneumoniae (strain 342), this protein is Octanoyltransferase.